The chain runs to 295 residues: Acetylglutamate kinase (295 aa).

Substrate is bound by residues 64–65 (GG), R86, and N190.

Belongs to the acetylglutamate kinase family. ArgB subfamily.

Its subcellular location is the cytoplasm. It carries out the reaction N-acetyl-L-glutamate + ATP = N-acetyl-L-glutamyl 5-phosphate + ADP. The protein operates within amino-acid biosynthesis; L-arginine biosynthesis; N(2)-acetyl-L-ornithine from L-glutamate: step 2/4. Catalyzes the ATP-dependent phosphorylation of N-acetyl-L-glutamate. The sequence is that of Acetylglutamate kinase from Pelotomaculum thermopropionicum (strain DSM 13744 / JCM 10971 / SI).